A 76-amino-acid polypeptide reads, in one-letter code: GLPDGVEDLPKAEDDHAHDYVNDAADTDHARFQEGQLCENCQFWVDYVNGWGYCQHPDFTDVLVRGEGWCSVYAPA.

The [4Fe-4S] cluster site is built by Cys-38, Cys-41, Cys-54, and Cys-70.

Belongs to the high-potential iron-sulfur protein (HiPIP) family. Homodimer.

Functionally, specific class of high-redox-potential 4Fe-4S ferredoxins. Functions in anaerobic electron transport in most purple and in some other photosynthetic bacteria and in at least one genus (Paracoccus) of halophilic, denitrifying bacteria. The protein is High-potential iron-sulfur protein isozyme 2 (hip2) of Halorhodospira halophila (Ectothiorhodospira halophila).